A 175-amino-acid chain; its full sequence is Receptor activity-modifying protein 2 (175 aa).

The N-terminal stretch at 1–42 (MASLRVERAGGPRLPRTRVGRPAALRLLLLLGAVLNPHEALA) is a signal peptide. The Extracellular segment spans residues 43-143 (QPLPTTGTPG…VQPTFSDPPE (101 aa)). Intrachain disulfides connect Cys-68–Cys-99 and Cys-84–Cys-131. Asn-130 carries N-linked (GlcNAc...) asparagine glycosylation. A helical membrane pass occupies residues 144–165 (DVLLAMIIAPICLIPFLITLVV). The Cytoplasmic segment spans residues 166–175 (WRSKDSEAQA).

Belongs to the RAMP family. As to quaternary structure, heterodimer of CALCRL and RAMP2; the interaction forms the receptor complex for adrenomedullin/ADM. Heterodimer of CALCR and RAMP2; interaction forms the AMYR2 receptor complex for calcitonin/CALC and amylin/IAPP. As to expression, strongly expressed in lung, breast, immune system and fetal tissues.

The protein localises to the cell membrane. Accessory protein that interacts with and modulates the function of G-protein coupled receptors including calcitonin gene-related peptide type 1 receptor (CALCRL) and calcitonin receptor (CALCR). Required for the transport of CALCRL to the plasma membrane. Together with CALCRL, form a receptor complex for adrenomedullin/ADM. Together with CALCR, act as a receptor complex for calcitonin/CT/CALC. Together with CALCR, also act as a receptor complex for amylin/IAPP. In Homo sapiens (Human), this protein is Receptor activity-modifying protein 2.